Reading from the N-terminus, the 185-residue chain is Nuclear transcription factor Y subunit B-3 (185 aa).

A compositionally biased stretch (gly residues) spans 1–36 (MADGPGSPGGGGGSHESGSPRGGGGGGGGGGGGGGV). Positions 1–39 (MADGPGSPGGGGGSHESGSPRGGGGGGGGGGGGGGVREQ) are disordered. The DNA-binding element occupies 43–49 (LPIANIS). The subunit association domain (SAD) stretch occupies residues 70-81 (VQECVSEFISFI). The disordered stretch occupies residues 145 to 164 (KDVLGSHGGSSSSAQGMGQQ). Residues 153–164 (GSSSSAQGMGQQ) are compositionally biased toward low complexity.

Belongs to the NFYB/HAP3 subunit family. Heterotrimeric transcription factor composed of three components, NF-YA, NF-YB and NF-YC. NF-YB and NF-YC must interact and dimerize for NF-YA association and DNA binding. As to expression, ubiquitous.

Its subcellular location is the nucleus. Component of the NF-Y/HAP transcription factor complex. The NF-Y complex stimulates the transcription of various genes by recognizing and binding to a CCAAT motif in promoters. May regulate the expression of photosynthetic genes, and may be involved in chloroplast and amyloplast development. The protein is Nuclear transcription factor Y subunit B-3 (NFYB3) of Oryza sativa subsp. japonica (Rice).